Here is a 316-residue protein sequence, read N- to C-terminus: Ribosomal RNA small subunit methyltransferase H (316 aa).

S-adenosyl-L-methionine contacts are provided by residues 35 to 37, Asp-55, Phe-79, Asp-101, and Gln-108; that span reads GGH.

It belongs to the methyltransferase superfamily. RsmH family.

It is found in the cytoplasm. The enzyme catalyses cytidine(1402) in 16S rRNA + S-adenosyl-L-methionine = N(4)-methylcytidine(1402) in 16S rRNA + S-adenosyl-L-homocysteine + H(+). In terms of biological role, specifically methylates the N4 position of cytidine in position 1402 (C1402) of 16S rRNA. The polypeptide is Ribosomal RNA small subunit methyltransferase H (Vibrio proteolyticus (Aeromonas proteolytica)).